The sequence spans 164 residues: Protein SprT (164 aa).

The 143-residue stretch at glutamine 14–valine 156 folds into the SprT-like domain. Histidine 69 provides a ligand contact to Zn(2+). The active site involves glutamate 70. Residue histidine 73 coordinates Zn(2+).

Belongs to the SprT family. Requires Zn(2+) as cofactor.

It localises to the cytoplasm. The sequence is that of Protein SprT from Pseudomonas putida (strain GB-1).